A 475-amino-acid polypeptide reads, in one-letter code: Solute carrier family 46 member 2 (475 aa).

Over 1–23 (MSPEVTCPRRGHLPRFHPRTWVE) the chain is Cytoplasmic. The helical transmembrane segment at 24–44 (PVVASSQVAASLYDAGLLLVV) threads the bilayer. Residues 45–78 (KASYGTGGSSNHSASPSPRGALEDQQQRAISNFY) are Extracellular-facing. N-linked (GlcNAc...) asparagine glycosylation is present at Asn-55. The helical transmembrane segment at 79–99 (IIYNLVVGLSPLLSAYGLGWL) threads the bilayer. The Cytoplasmic portion of the chain corresponds to 100-108 (SDRYHRKIS). The chain crosses the membrane as a helical span at residues 109-129 (ICMSLLGFLLSRLGLLLKVLL). The Extracellular portion of the chain corresponds to 130–138 (DWPVEVLYG). The helical transmembrane segment at 139-159 (AAALNGLFGGFSAFWSGVMAL) threads the bilayer. The Cytoplasmic segment spans residues 160–172 (GSLGSSEGRRSVR). A helical membrane pass occupies residues 173-193 (LILIDLMLGLAGFCGSMASGH). Residues 194–205 (LFKQMAGHSGQG) lie on the Extracellular side of the membrane. The helical transmembrane segment at 206-226 (LILTACSVSCASFALLYSLLV) threads the bilayer. Residues 227–282 (LKVPESVAKPSQELPAVDTVSGTVGTYRTLDPDQLDQQYAVGHPPSPGKAKPHKTT) are Cytoplasmic-facing. A helical membrane pass occupies residues 283–303 (IALLFVGAIIYDLAVVGTVDV). The Extracellular segment spans residues 304–320 (IPLFVLREPLGWNQVQV). Residues 321–341 (GYGMAAGYTIFITSFLGVLVF) traverse the membrane as a helical segment. Residues 342–347 (SRCFRD) are Cytoplasmic-facing. The chain crosses the membrane as a helical span at residues 348–368 (TTMIMIGMVSFGSGALLLAFV). The Extracellular portion of the chain corresponds to 369 to 370 (KE). A helical transmembrane segment spans residues 371 to 391 (TYMFYIARAVMLFALIPVTTI). Residues 392-406 (RSAMSKLIKGSSYGK) are Cytoplasmic-facing. Residues 407-427 (VFVILQLSLALTGVVTSTLYN) form a helical membrane-spanning segment. At 428 to 435 (KIYQLTMD) the chain is on the extracellular side. Residues 436–456 (MFVGSCFALSSFLSFLAIIPI) form a helical membrane-spanning segment. Residues 457 to 475 (SIVAYKQVPLSPYGDIIEK) lie on the Cytoplasmic side of the membrane.

Belongs to the major facilitator superfamily. SLC46A family. In terms of processing, glycosylated. Strongly expressed in the adult thymus. Expressed in spleen, lymph nodes, thymus, PBL, bone marrow and fetal liver. Expressed in monocytes and pre-dendridic cells.

The protein resides in the endosome membrane. It is found in the cell membrane. It carries out the reaction N-acetyl-beta-D-glucosaminyl-(1-&gt;4)-1,6-anhydro-N-acetyl-beta-D-muramoyl-L-alanyl-gamma-D-glutamyl-meso-2,6-diaminopimeloyl-D-alanine(out) + n H(+)(out) = N-acetyl-beta-D-glucosaminyl-(1-&gt;4)-1,6-anhydro-N-acetyl-beta-D-muramoyl-L-alanyl-gamma-D-glutamyl-meso-2,6-diaminopimeloyl-D-alanine(in) + n H(+)(in). The enzyme catalyses L-alanyl-gamma-D-glutamyl-meso-2,6-diaminopimelate(out) + n H(+)(out) = L-alanyl-gamma-D-glutamyl-meso-2,6-diaminopimelate(in) + n H(+)(in). It catalyses the reaction N-acetyl-D-muramoyl-L-alanyl-D-isoglutamine(out) + n H(+)(out) = N-acetyl-D-muramoyl-L-alanyl-D-isoglutamine(in) + n H(+)(in). The catalysed reaction is 2',3'-cGAMP(out) + n H(+)(out) = 2',3'-cGAMP(in) + n H(+)(in). It carries out the reaction 3',3'-cGAMP(out) + n H(+)(out) = 3',3'-cGAMP(in) + n H(+)(in). Its function is as follows. Proton-coupled transporter that delivers pathogen-associated or danger-associated molecular patterns to cytosolic pattern recognition receptors as part of the innate immune response to microbes or tissue injury. Has selectivity toward muropeptides that contain the amino acid diaminopimelic acid (DAP-type peptidoglycan muropeptides) including Tri-DAP and tracheal toxin (TCT), common in Gram-negative bacteria and Gram-positive bacilli. In the context of immune recognition of skin microbiota, shuttles bacterial muropeptides across the endolysosomal membranes into the cytosol for recognition by NOD1, triggering MYD88-dependent secretion of IL1A and neutrophil recruitment in a pyroptosis-type inflammatory process. To a lesser extent and redundantly, transports muramyl dipeptides derived from most bacterial proteoglycans, eliciting NOD2 receptor activation and downstream inflammatory responses. Postulated to function as a dominant importer of cyclic GMP-AMP dinucleotides (cGAMPs) in monocyte and macrophage cell lineages. Selectively imports cGAMPs derived from pathogenic bacteria such as 3'3'-cGAMP thus providing for differential immune recognition of pathogenic versus commensal bacteria. During tumorigenesis may transport extracellular tumor-derived 2'3'-cGAMP across the plasma membrane of M1-polarized macrophages to activate the anti-tumoral stimulator of interferon genes (STING) pathway. The transport mechanism, its electrogenicity and stoichiometry remain to be elucidated. The polypeptide is Solute carrier family 46 member 2 (Homo sapiens (Human)).